Consider the following 341-residue polypeptide: tRNA N6-adenosine threonylcarbamoyltransferase (341 aa).

Residues H117 and H121 each contribute to the Fe cation site. Residues 139–143, D172, G185, D189, and N278 each bind substrate; that span reads VVSGG. Position 307 (D307) interacts with Fe cation.

It belongs to the KAE1 / TsaD family. It depends on Fe(2+) as a cofactor.

Its subcellular location is the cytoplasm. The catalysed reaction is L-threonylcarbamoyladenylate + adenosine(37) in tRNA = N(6)-L-threonylcarbamoyladenosine(37) in tRNA + AMP + H(+). Functionally, required for the formation of a threonylcarbamoyl group on adenosine at position 37 (t(6)A37) in tRNAs that read codons beginning with adenine. Is involved in the transfer of the threonylcarbamoyl moiety of threonylcarbamoyl-AMP (TC-AMP) to the N6 group of A37, together with TsaE and TsaB. TsaD likely plays a direct catalytic role in this reaction. The sequence is that of tRNA N6-adenosine threonylcarbamoyltransferase from Bacillus licheniformis (strain ATCC 14580 / DSM 13 / JCM 2505 / CCUG 7422 / NBRC 12200 / NCIMB 9375 / NCTC 10341 / NRRL NRS-1264 / Gibson 46).